The chain runs to 520 residues: Putative lipase ATG15 (520 aa).

The Cytoplasmic segment spans residues 1–14 (MLHKSPSRKRFASP). Residues 15–35 (LHLGCILTLTVLCLIAYYFAL) traverse the membrane as a helical; Signal-anchor for type II membrane protein segment. Residues 36 to 520 (PDYLSVGKSS…WLGFCTKYEL (485 aa)) lie on the Lumenal side of the membrane. Residues asparagine 173, asparagine 202, and asparagine 208 are each glycosylated (N-linked (GlcNAc...) asparagine). Catalysis depends on serine 332, which acts as the Charge relay system.

It belongs to the AB hydrolase superfamily. Lipase family. Binds to both phosphatidylinositol (PI) and phosphatidylinositol 3,5-bisphosphate (PIP2). In terms of processing, glycosylated.

The protein localises to the endosome. It localises to the multivesicular body membrane. It is found in the prevacuolar compartment membrane. It carries out the reaction a triacylglycerol + H2O = a diacylglycerol + a fatty acid + H(+). Lipase which is essential for lysis of subvacuolar cytoplasm to vacuole targeted bodies and intravacuolar autophagic bodies. Involved in the lysis of intravacuolar multivesicular body (MVB) vesicles. The intravacuolar membrane disintegration by ATG15 is critical to life span extension. This is Putative lipase ATG15 (ATG15) from Saccharomyces cerevisiae (strain ATCC 204508 / S288c) (Baker's yeast).